We begin with the raw amino-acid sequence, 234 residues long: Adenosine 5'-phosphosulfate reductase (234 aa).

[4Fe-4S] cluster-binding residues include Cys120, Cys121, Cys203, and Cys206. The Nucleophile; cysteine thiosulfonate intermediate role is filled by Cys229.

This sequence belongs to the PAPS reductase family. CysH subfamily. [4Fe-4S] cluster is required as a cofactor.

The protein localises to the cytoplasm. The catalysed reaction is [thioredoxin]-disulfide + sulfite + AMP + 2 H(+) = adenosine 5'-phosphosulfate + [thioredoxin]-dithiol. The protein operates within sulfur metabolism; hydrogen sulfide biosynthesis; sulfite from sulfate. Functionally, catalyzes the formation of sulfite from adenosine 5'-phosphosulfate (APS) using thioredoxin as an electron donor. The protein is Adenosine 5'-phosphosulfate reductase of Bacillus cereus (strain ATCC 14579 / DSM 31 / CCUG 7414 / JCM 2152 / NBRC 15305 / NCIMB 9373 / NCTC 2599 / NRRL B-3711).